The chain runs to 326 residues: Neuferricin homolog (326 aa).

An N-terminal signal peptide occupies residues Met-1–Ser-34. In terms of domain architecture, Cytochrome b5 heme-binding spans Lys-98–Ala-197.

The protein belongs to the cytochrome b5 family. MAPR subfamily.

It localises to the secreted. Its function is as follows. Heme-binding protein. The chain is Neuferricin homolog (tag-131) from Caenorhabditis elegans.